Here is a 125-residue protein sequence, read N- to C-terminus: Photosystem II extrinsic protein U (125 aa).

The signal sequence occupies residues 1–29 (MKRLLSWLTGLVVIAGLLIGLLVPPSVSA).

Belongs to the PsbU family. PSII is composed of 1 copy each of membrane proteins PsbA, PsbB, PsbC, PsbD, PsbE, PsbF, PsbH, PsbI, PsbJ, PsbK, PsbL, PsbM, PsbT, PsbX, PsbY, PsbZ, Psb30/Ycf12, peripheral proteins PsbO, CyanoQ (PsbQ), PsbU, PsbV and a large number of cofactors. It forms dimeric complexes.

It is found in the cellular thylakoid membrane. One of the extrinsic, lumenal subunits of photosystem II (PSII). PSII is a light-driven water plastoquinone oxidoreductase, using light energy to abstract electrons from H(2)O, generating a proton gradient subsequently used for ATP formation. The extrinsic proteins stabilize the structure of photosystem II oxygen-evolving complex (OEC), the ion environment of oxygen evolution and protect the OEC against heat-induced inactivation. This chain is Photosystem II extrinsic protein U, found in Synechococcus sp. (strain CC9311).